A 332-amino-acid chain; its full sequence is Formamidase (332 aa).

The CN hydrolase domain maps to phenylalanine 14–proline 259. Glutamate 60 acts as the Proton acceptor in catalysis. Lysine 132 functions as the Proton donor in the catalytic mechanism. Cysteine 165 acts as the Nucleophile in catalysis.

This sequence belongs to the carbon-nitrogen hydrolase superfamily. Aliphatic amidase family.

The enzyme catalyses formamide + H2O = formate + NH4(+). Is an aliphatic amidase with a restricted substrate specificity, as it only hydrolyzes formamide. In Bacillus cereus (strain G9842), this protein is Formamidase.